A 622-amino-acid chain; its full sequence is 1-deoxy-D-xylulose-5-phosphate synthase (622 aa).

Thiamine diphosphate-binding positions include H80 and 121 to 123; that span reads GHS. D152 lines the Mg(2+) pocket. Thiamine diphosphate contacts are provided by residues 153–154, N181, Y288, and E370; that span reads GA. N181 contributes to the Mg(2+) binding site.

The protein belongs to the transketolase family. DXPS subfamily. Homodimer. Mg(2+) is required as a cofactor. Requires thiamine diphosphate as cofactor.

The catalysed reaction is D-glyceraldehyde 3-phosphate + pyruvate + H(+) = 1-deoxy-D-xylulose 5-phosphate + CO2. It functions in the pathway metabolic intermediate biosynthesis; 1-deoxy-D-xylulose 5-phosphate biosynthesis; 1-deoxy-D-xylulose 5-phosphate from D-glyceraldehyde 3-phosphate and pyruvate: step 1/1. Catalyzes the acyloin condensation reaction between C atoms 2 and 3 of pyruvate and glyceraldehyde 3-phosphate to yield 1-deoxy-D-xylulose-5-phosphate (DXP). The sequence is that of 1-deoxy-D-xylulose-5-phosphate synthase from Shewanella denitrificans (strain OS217 / ATCC BAA-1090 / DSM 15013).